The following is a 282-amino-acid chain: UDP-3-O-acyl-N-acetylglucosamine deacetylase (282 aa).

3 residues coordinate Zn(2+): histidine 81, histidine 239, and aspartate 243. The active-site Proton donor is histidine 266.

It belongs to the LpxC family. Zn(2+) serves as cofactor.

It catalyses the reaction a UDP-3-O-[(3R)-3-hydroxyacyl]-N-acetyl-alpha-D-glucosamine + H2O = a UDP-3-O-[(3R)-3-hydroxyacyl]-alpha-D-glucosamine + acetate. The protein operates within glycolipid biosynthesis; lipid IV(A) biosynthesis; lipid IV(A) from (3R)-3-hydroxytetradecanoyl-[acyl-carrier-protein] and UDP-N-acetyl-alpha-D-glucosamine: step 2/6. Its function is as follows. Catalyzes the hydrolysis of UDP-3-O-myristoyl-N-acetylglucosamine to form UDP-3-O-myristoylglucosamine and acetate, the committed step in lipid A biosynthesis. In Chlamydia pneumoniae (Chlamydophila pneumoniae), this protein is UDP-3-O-acyl-N-acetylglucosamine deacetylase.